The following is a 485-amino-acid chain: Rhamnulokinase (485 aa).

Position 11–15 (11–15) interacts with ATP; the sequence is ASSGR. Substrate contacts are provided by residues Ala79 and 234–236; that span reads HDT. Catalysis depends on Asp235, which acts as the Proton acceptor. Thr257 contacts ATP. Asn294 lines the substrate pocket. Gln302 and Gly401 together coordinate ATP.

It belongs to the rhamnulokinase family. Mg(2+) is required as a cofactor.

It carries out the reaction L-rhamnulose + ATP = L-rhamnulose 1-phosphate + ADP + H(+). It functions in the pathway carbohydrate degradation; L-rhamnose degradation; glycerone phosphate from L-rhamnose: step 2/3. Involved in the catabolism of L-rhamnose (6-deoxy-L-mannose). Catalyzes the transfer of the gamma-phosphate group from ATP to the 1-hydroxyl group of L-rhamnulose to yield L-rhamnulose 1-phosphate. This Ligilactobacillus salivarius (strain UCC118) (Lactobacillus salivarius) protein is Rhamnulokinase.